Here is a 435-residue protein sequence, read N- to C-terminus: Enolase (435 aa).

Glutamine 163 contributes to the (2R)-2-phosphoglycerate binding site. The active-site Proton donor is glutamate 205. The Mg(2+) site is built by aspartate 243, glutamate 292, and aspartate 319. Positions 344, 373, 374, and 395 each coordinate (2R)-2-phosphoglycerate. Lysine 344 acts as the Proton acceptor in catalysis.

The protein belongs to the enolase family. Mg(2+) is required as a cofactor.

The protein localises to the cytoplasm. Its subcellular location is the secreted. It is found in the cell surface. It carries out the reaction (2R)-2-phosphoglycerate = phosphoenolpyruvate + H2O. It functions in the pathway carbohydrate degradation; glycolysis; pyruvate from D-glyceraldehyde 3-phosphate: step 4/5. Catalyzes the reversible conversion of 2-phosphoglycerate (2-PG) into phosphoenolpyruvate (PEP). It is essential for the degradation of carbohydrates via glycolysis. In Streptococcus pyogenes serotype M12 (strain MGAS2096), this protein is Enolase.